Here is a 136-residue protein sequence, read N- to C-terminus: Late embryogenesis abundant protein D-7 (136 aa).

Disordered regions lie at residues M1–A108 and G117–D136. Residues G11–K58 are compositionally biased toward basic and acidic residues. 5 LEA 11-mer repeat repeats span residues K31–E41, T42–E52, T53–G63, A64–Q74, and T75–E85.

The protein belongs to the LEA type 4 family.

Functionally, LEA proteins are late embryonic proteins abundant in higher plant seed embryos. There are two subsets of LEA proteins (5a and 5b), the first ones are expressed when the cotyledon weight reach 80 mg and the second set are expressed above 100 mg. The function of those proteins is not known. This Gossypium hirsutum (Upland cotton) protein is Late embryogenesis abundant protein D-7.